Consider the following 180-residue polypeptide: Cytochrome c oxidase assembly protein CtaG (180 aa).

Residues 1 to 8 (MSKKSNKS) are Cytoplasmic-facing. The chain crosses the membrane as a helical; Signal-anchor for type II membrane protein span at residues 9–29 (LAFSLLGLIVSMVLLSFAAVP). Topologically, residues 30 to 180 (LYNLFCKVTG…SFFKVRDVKK (151 aa)) are periplasmic.

Belongs to the COX11/CtaG family.

Its subcellular location is the cell inner membrane. Its function is as follows. Exerts its effect at some terminal stage of cytochrome c oxidase synthesis, probably by being involved in the insertion of the copper B into subunit I. In Rickettsia bellii (strain RML369-C), this protein is Cytochrome c oxidase assembly protein CtaG.